The following is a 146-amino-acid chain: NADH-quinone oxidoreductase subunit A (146 aa).

Transmembrane regions (helical) follow at residues 14–34, 68–88, and 96–116; these read FGLF…GGFL, LVAM…AWAV, and IGFI…IYLV.

It belongs to the complex I subunit 3 family. NDH-1 is composed of 13 different subunits. Subunits NuoA, H, J, K, L, M, N constitute the membrane sector of the complex.

It is found in the cell inner membrane. It catalyses the reaction a quinone + NADH + 5 H(+)(in) = a quinol + NAD(+) + 4 H(+)(out). NDH-1 shuttles electrons from NADH, via FMN and iron-sulfur (Fe-S) centers, to quinones in the respiratory chain. The immediate electron acceptor for the enzyme in this species is believed to be ubiquinone. Couples the redox reaction to proton translocation (for every two electrons transferred, four hydrogen ions are translocated across the cytoplasmic membrane), and thus conserves the redox energy in a proton gradient. This chain is NADH-quinone oxidoreductase subunit A, found in Pectobacterium carotovorum subsp. carotovorum (Erwinia carotovora subsp. carotovora).